A 651-amino-acid chain; its full sequence is Probable potassium transport system protein Kup (651 aa).

Helical transmembrane passes span 41 to 61 (LVLGALGVVYGDIGTSPIYAF), 82 to 102 (VVSLIFWALTLVVTVKYVLFV), 130 to 150 (LILGVGICGAALFFGDAVITP), 163 to 183 (IVAPNLTPFVVPATVVILVTL), 194 to 214 (VAIVFGPIMALWFVALGASGL), 235 to 255 (FLTVSPAVAFVTVGAVFLAMT), 276 to 296 (WLWIVFPCLLLNYFGQAAFIL), 309 to 329 (MIPSFALWPMVLLATAATVIA), 366 to 386 (IYIPRVNLLLGLAVVILVLGF), 395 to 415 (AYGIAVTGNMLVTTVLLYIVM), 426 to 446 (ALPIILGFLVIDMLFFSANII), and 450 to 470 (EGGWASIGIATVLVLIMWTWV).

It belongs to the HAK/KUP transporter (TC 2.A.72) family.

It localises to the cell inner membrane. The catalysed reaction is K(+)(in) + H(+)(in) = K(+)(out) + H(+)(out). Transport of potassium into the cell. Likely operates as a K(+):H(+) symporter. This Brucella suis (strain ATCC 23445 / NCTC 10510) protein is Probable potassium transport system protein Kup.